The chain runs to 377 residues: MKIDYYEALGVTRTADDKTLKAAFRKLAMQYHPDRNPDDPEAERKFKEIGEAYETLKDPQKRAAYDRFGHAAFENGGMGGGFGNGFGGAGGFADIFEDIFGEMMGGGRRRSNGGRERGADLRYNMEVTLEEAYAGKTAQIRVPTSITCDECSGSGAKPGSQPTTCTMCSGSGRVRAAQGFFSVERTCPGCNGRGQIIKDPCEKCHGQGRVTQERSLSVNIPAGIEDGTRIRLAGEGEAGLRGGPAGDLYIFLSVKPHEFFQRDGADLYCKVPISMTTAALGGQFEVSTLDGTQTRVKVPEGTQNGKQFRLKGKGMPVLRQSVTGDLYIQIDIETPQNLSKRQRELLEEFEKLSWQENSPKSAGLFSRMKEFFEGIGE.

Residues 4–69 (DYYEALGVTR…QKRAAYDRFG (66 aa)) form the J domain. A CR-type zinc finger spans residues 135 to 213 (GKTAQIRVPT…CHGQGRVTQE (79 aa)). C148, C151, C165, C168, C187, C190, C201, and C204 together coordinate Zn(2+). 4 CXXCXGXG motif repeats span residues 148-155 (CDECSGSG), 165-172 (CTMCSGSG), 187-194 (CPGCNGRG), and 201-208 (CEKCHGQG).

Belongs to the DnaJ family. As to quaternary structure, homodimer. It depends on Zn(2+) as a cofactor.

The protein resides in the cytoplasm. Participates actively in the response to hyperosmotic and heat shock by preventing the aggregation of stress-denatured proteins and by disaggregating proteins, also in an autonomous, DnaK-independent fashion. Unfolded proteins bind initially to DnaJ; upon interaction with the DnaJ-bound protein, DnaK hydrolyzes its bound ATP, resulting in the formation of a stable complex. GrpE releases ADP from DnaK; ATP binding to DnaK triggers the release of the substrate protein, thus completing the reaction cycle. Several rounds of ATP-dependent interactions between DnaJ, DnaK and GrpE are required for fully efficient folding. Also involved, together with DnaK and GrpE, in the DNA replication of plasmids through activation of initiation proteins. This Brucella ovis (strain ATCC 25840 / 63/290 / NCTC 10512) protein is Chaperone protein DnaJ.